The chain runs to 1209 residues: Zinc finger protein 804A (1209 aa).

The C2H2-type zinc finger occupies 57–81 (FYCELCDKQYYKHQEFDNHINSYDH). The span at 380–394 (VKHNEASTTEVENKN) shows a compositional bias: basic and acidic residues. Disordered regions lie at residues 380–401 (VKHNEASTTEVENKNGPETLAP) and 792–860 (PEEF…MKPQ). Residues 807–819 (KPKKKRRRKRGRF) are compositionally biased toward basic residues. 2 stretches are compositionally biased toward basic and acidic residues: residues 826–836 (LELKENTDYPV) and 848–860 (LISEDKKEKMKPQ).

This is Zinc finger protein 804A (ZNF804A) from Homo sapiens (Human).